We begin with the raw amino-acid sequence, 184 residues long: Ribosome-recycling factor (184 aa).

Belongs to the RRF family.

Its subcellular location is the cytoplasm. Responsible for the release of ribosomes from messenger RNA at the termination of protein biosynthesis. May increase the efficiency of translation by recycling ribosomes from one round of translation to another. This chain is Ribosome-recycling factor, found in Clostridium botulinum (strain Langeland / NCTC 10281 / Type F).